Consider the following 614-residue polypeptide: Vitamin B12 transporter BtuB (614 aa).

An N-terminal signal peptide occupies residues 1–20 (MIKKATLLTAFSVTAFSAWA). The TonB box motif lies at 26 to 33 (DTLVVTAN). Residues 38–152 (PRSAVLAPVT…IGGVVNIITT (115 aa)) enclose the TBDR plug domain. Cyanocob(III)alamin contacts are provided by residues Ser85, Asn92, and 110–111 (VS). Residues 155-614 (NPGTELTAGW…EYTLSGSYTF (460 aa)) form the TBDR beta-barrel domain. 3 beta stranded membrane-spanning segments follow: residues 158–165 (TELTAGWG), 169–178 (YQNYDISTQQ), and 184–195 (TRATLIGDYEYT). Positions 199, 211, 213, and 215 each coordinate Ca(2+). 2 beta stranded membrane passes run 217 to 227 (FLSKTLYGALE) and 232 to 248 (DRWS…NRTD). The Ca(2+) site is built by Tyr249 and Asp250. Residue Ala251 participates in cyanocob(III)alamin binding. Ca(2+) is bound at residue Asp261. Transmembrane regions (beta stranded) follow at residues 263–277 (RKLY…LRFN), 279–296 (ERIQ…KDYN), 309–325 (TLDE…NSVV), 328–337 (HGNVGAGVDW), 353–369 (YDQR…QQLG), 371–381 (FTLEAAARSDD), 385–400 (FGRH…WEFI), 403–417 (YRFI…KAPN), 434–443 (KSKQWEGAFE), 449–458 (VSWRISGYRN), 473–490 (YYNE…TANF), 494–509 (PLTH…ARNA), 517–529 (RRSK…QLDW), and 535–550 (DWGV…YDSD). Residue Thr309 participates in cyanocob(III)alamin binding. Arg517 is a cyanocob(III)alamin binding site. A cyanocob(III)alamin-binding site is contributed by Tyr551. Beta stranded transmembrane passes span 558 to 572 (TVKM…LTVA), 585 to 596 (IANLFDKDYETV), and 602 to 614 (AGRE…SYTF). Positions 597-614 (YGYQTAGREYTLSGSYTF) match the TonB C-terminal box motif.

This sequence belongs to the TonB-dependent receptor family. BtuB (TC 1.B.14.3.1) subfamily.

The protein resides in the cell outer membrane. Functionally, involved in the active translocation of vitamin B12 (cyanocobalamin) across the outer membrane to the periplasmic space. It derives its energy for transport by interacting with the trans-periplasmic membrane protein TonB. The polypeptide is Vitamin B12 transporter BtuB (Salmonella choleraesuis (strain SC-B67)).